A 377-amino-acid chain; its full sequence is D-alanine--D-alanine ligase (377 aa).

The 207-residue stretch at 141–347 folds into the ATP-grasp domain; the sequence is KRILNQAGIR…YSELIDRLIQ (207 aa). Residue 171-226 participates in ATP binding; sequence KEELGDLVFVKPAKQGSSVGIHKVDTEEEYETAMKDAFTYDYKVLVEAGIKNPREI. Mg(2+) is bound by residues aspartate 301, glutamate 314, and asparagine 316.

This sequence belongs to the D-alanine--D-alanine ligase family. The cofactor is Mg(2+). Mn(2+) is required as a cofactor.

Its subcellular location is the cytoplasm. The enzyme catalyses 2 D-alanine + ATP = D-alanyl-D-alanine + ADP + phosphate + H(+). It functions in the pathway cell wall biogenesis; peptidoglycan biosynthesis. Its function is as follows. Cell wall formation. This Limosilactobacillus fermentum (strain NBRC 3956 / LMG 18251) (Lactobacillus fermentum) protein is D-alanine--D-alanine ligase.